A 562-amino-acid chain; its full sequence is NAD-dependent malic enzyme (562 aa).

The active-site Proton donor is the Tyr101. Arg154 serves as a coordination point for NAD(+). Residue Lys172 is the Proton acceptor of the active site. Residues Glu243, Asp244, and Asp267 each coordinate a divalent metal cation. NAD(+) contacts are provided by Asp267 and Asn415.

Belongs to the malic enzymes family. In terms of assembly, homotetramer. It depends on Mg(2+) as a cofactor. Mn(2+) serves as cofactor.

It carries out the reaction (S)-malate + NAD(+) = pyruvate + CO2 + NADH. It catalyses the reaction oxaloacetate + H(+) = pyruvate + CO2. The protein is NAD-dependent malic enzyme of Aliivibrio fischeri (strain ATCC 700601 / ES114) (Vibrio fischeri).